Reading from the N-terminus, the 108-residue chain is MGVHVETISPGDWRTFPKRSQTCVMHYTGMLEDGKKFDSSRDRNKPFKFMLGKQEVIRGWEEGVVQMSVGQRAKLTISPDYAYGATGHPGIIPPHATLVFDVELLKLE.

Positions 20-108 constitute a PPIase FKBP-type domain; that stretch reads SQTCVMHYTG…VFDVELLKLE (89 aa).

This sequence belongs to the FKBP-type PPIase family. FKBP1 subfamily.

It catalyses the reaction [protein]-peptidylproline (omega=180) = [protein]-peptidylproline (omega=0). Its function is as follows. Catalyzes the cis-trans isomerization of proline imidic peptide bonds in oligopeptides. In Homo sapiens (Human), this protein is Peptidyl-prolyl cis-trans isomerase FKBP1C.